The chain runs to 502 residues: Cytochrome c-552 (502 aa).

The N-terminal stretch at M1–A25 is a signal peptide. H105 serves as a coordination point for heme c. C133, C136, and K137 together coordinate heme. Positions 171, 174, 175, 220, 223, and 224 each coordinate heme c. The Ca(2+) site is built by E226, Y227, K271, and Q273. Y227 contacts substrate. H274 contacts substrate. Heme c is bound by residues H285, C292, C295, H296, H311, C324, C327, H328, and H403. The disordered stretch occupies residues R481–K502.

This sequence belongs to the cytochrome c-552 family. The cofactor is Ca(2+). Heme c serves as cofactor.

The protein localises to the periplasm. The enzyme catalyses 6 Fe(III)-[cytochrome c] + NH4(+) + 2 H2O = 6 Fe(II)-[cytochrome c] + nitrite + 8 H(+). The protein operates within nitrogen metabolism; nitrate reduction (assimilation). Catalyzes the reduction of nitrite to ammonia, consuming six electrons in the process. This Haemophilus ducreyi (strain 35000HP / ATCC 700724) protein is Cytochrome c-552.